The sequence spans 475 residues: Cytochrome P450 monooxygenase sthD (475 aa).

The signal sequence occupies residues 1–17 (MAAYFLLGLYGSTLVYR). Residues 276–296 (FIIIAGSDTVAATLTFAFFYL) traverse the membrane as a helical segment. N-linked (GlcNAc...) asparagine glycosylation occurs at N336. Residue C418 participates in heme binding.

Belongs to the cytochrome P450 family. It depends on heme as a cofactor.

Its subcellular location is the membrane. The enzyme catalyses betaenone A + NADPH + O2 + H(+) = stemphyloxin II + NADP(+) + H2O. It carries out the reaction betaenone C + NADPH + O2 + H(+) = stemphyloxin I + NADP(+) + H2O. Its pathway is mycotoxin biosynthesis. In terms of biological role, cytochrome P450 monooxygenase; part of the gene cluster that mediates the biosynthesis of the phytotoxin stemphyloxin II. The first step of the pathway is the synthesis of dehydroprobetaenone I by the polyketide synthase sthA and the enoyl reductase sthE via condensation of one acetyl-CoA starter unit with 7 malonyl-CoA units and 5 methylations. The C-terminal reductase (R) domain of sthA catalyzes the reductive release of the polyketide chain. Because sthA lacks a designated enoylreductase (ER) domain, the required activity is provided the enoyl reductase sthE. The short-chain dehydrogenase/reductase sthC then catalyzes reduction of dehydroprobetaenone I to probetaenone I. The cytochrome P450 monooxygenase sthF catalyzes successive epoxidation, oxidation (resulting from epoxide opening) and hydroxylation to install a tertiary alcohol in the decaline ring to yield betaenone C from dehydroprobetaenone I and betaenone B from probetaenone I. The FAD-linked oxidoreductase sthB is responsible for the conversion of betaenone C to betaenone A via an intramolecular aldol reaction between C-1 and C-17 to form the bridged tricyclic system in betaenone A. Finally, the cytochrome P450 monooxygenase sthD catalyzes the hydroxylation of C-15 to afford the final metabolite stemphyloxin II. In Phaeosphaeria nodorum (strain SN15 / ATCC MYA-4574 / FGSC 10173) (Glume blotch fungus), this protein is Cytochrome P450 monooxygenase sthD.